The chain runs to 178 residues: Large ribosomal subunit protein uL6 (178 aa).

Belongs to the universal ribosomal protein uL6 family. In terms of assembly, part of the 50S ribosomal subunit.

In terms of biological role, this protein binds to the 23S rRNA, and is important in its secondary structure. It is located near the subunit interface in the base of the L7/L12 stalk, and near the tRNA binding site of the peptidyltransferase center. This Levilactobacillus brevis (strain ATCC 367 / BCRC 12310 / CIP 105137 / JCM 1170 / LMG 11437 / NCIMB 947 / NCTC 947) (Lactobacillus brevis) protein is Large ribosomal subunit protein uL6.